We begin with the raw amino-acid sequence, 110 residues long: Small ribosomal subunit protein bS16 (110 aa).

Residues 84-110 (KRAPRNNPEKAVPRKERKAAAEAAAKA) form a disordered region. Basic and acidic residues predominate over residues 90–103 (NPEKAVPRKERKAA).

It belongs to the bacterial ribosomal protein bS16 family.

The chain is Small ribosomal subunit protein bS16 from Afipia carboxidovorans (strain ATCC 49405 / DSM 1227 / KCTC 32145 / OM5) (Oligotropha carboxidovorans).